Reading from the N-terminus, the 501-residue chain is Ribose import ATP-binding protein RbsA (501 aa).

ABC transporter domains lie at 5-241 (LELK…VGRK) and 249-495 (LNLP…VGKQ). 37-44 (GENGAGKS) serves as a coordination point for ATP.

The protein belongs to the ABC transporter superfamily. Ribose importer (TC 3.A.1.2.1) family. As to quaternary structure, the complex is composed of an ATP-binding protein (RbsA), two transmembrane proteins (RbsC) and a solute-binding protein (RbsB).

It is found in the cell inner membrane. The enzyme catalyses D-ribose(out) + ATP + H2O = D-ribose(in) + ADP + phosphate + H(+). Functionally, part of the ABC transporter complex RbsABC involved in ribose import. Responsible for energy coupling to the transport system. In Photorhabdus laumondii subsp. laumondii (strain DSM 15139 / CIP 105565 / TT01) (Photorhabdus luminescens subsp. laumondii), this protein is Ribose import ATP-binding protein RbsA.